Reading from the N-terminus, the 1250-residue chain is Bifunctional autolysin (1250 aa).

Positions 1-29 (MAKKFNYKLPSMVALTLVGSAVTAHQVQA) are cleaved as a signal peptide. A compositionally biased stretch (polar residues) spans 103–138 (GDTRANQSATTNNTQPVAKSTSTTAPKTNTNVTNAG). Disordered regions lie at residues 103-151 (GDTR…NSEN) and 173-219 (AAAP…KYKP). Residues 173–196 (AAAPKAATTSAPKAKTEATPKVTT) are compositionally biased toward low complexity. The tract at residues 199-769 (ASAQPRSVAA…AVAQPKTAVK (571 aa)) is N-acetylmuramoyl-L-alanine amidase. GW domains follow at residues 437-511 (TVAA…YNTA), 513-587 (SPVN…DTAK), 606-680 (TVSS…YNNA), 682-756 (SPVN…VPAA), 778-853 (TTQT…VQNL), 855-930 (KEVK…APTA), and 937-1011 (AAKD…KELI). Residues 770–1250 (AYTVTKPQTT…GKYFDIPQYK (481 aa)) form an endo-beta-N-acetylglucosaminidase region.

It in the N-terminal section; belongs to the N-acetylmuramoyl-L-alanine amidase 2 family. In the C-terminal section; belongs to the glycosyl hydrolase 73 family. In terms of assembly, oligomer; forms a ring structure at the cell surface which is important for efficient partitioning of daughter cells after cell division. In terms of processing, undergoes proteolytic processing to generate the two extracellular lytic enzymes, probably at the septal region on the cell surface.

The protein localises to the secreted. It catalyses the reaction Hydrolyzes the link between N-acetylmuramoyl residues and L-amino acid residues in certain cell-wall glycopeptides.. It carries out the reaction an N(4)-(oligosaccharide-(1-&gt;3)-[oligosaccharide-(1-&gt;6)]-beta-D-Man-(1-&gt;4)-beta-D-GlcNAc-(1-&gt;4)-alpha-D-GlcNAc)-L-asparaginyl-[protein] + H2O = an oligosaccharide-(1-&gt;3)-[oligosaccharide-(1-&gt;6)]-beta-D-Man-(1-&gt;4)-D-GlcNAc + N(4)-(N-acetyl-beta-D-glucosaminyl)-L-asparaginyl-[protein]. In terms of biological role, endohydrolysis of the di-N-acetylchitobiosyl unit in high-mannose glycopeptides and glycoproteins containing the -[(Man)5(GlcNAc)2]-Asn structure. One N-acetyl-D-glucosamine residue remains attached to the protein; the rest of the oligosaccharide is released intact. Cleaves the peptidoglycan connecting the daughter cells at the end of the cell division cycle, resulting in the separation of the two newly divided cells. Acts as an autolysin in penicillin-induced lysis. The chain is Bifunctional autolysin (atl) from Staphylococcus aureus (strain MSSA476).